Reading from the N-terminus, the 415-residue chain is MTFDKIKVENPIVEMDGDEMTRVIWKSIKDKLICPFLELDIKYFDLGLPHRDATDDKVTVESAEATQKYNVAIKCATITPDEARVKEFNLKSMWRSPNGTIRNILNGTVFREPIMCKNIPRLVPGWTKPICIGRHAFGDQYRATDTVIQGAGKLKLVFVPEGTDEKTEFEVYNFTGAGGVALSMYNTDESVRSFAEASMNMAYQKKWPLYLSTKNTILKKYDGRFKDIFQEVYEANWKSKYEEAGIWYEHRLIDDMAAYALKSEGGYVWACKNYDGDVQSDFLAQGFGSLGLMTSVLVCPDGKTIEAEAAHGTVTRHYRVHQKGGETSTNSIASIFAWTRGLAHRATLDNNERLLDFTEKLEAACIGAVESGKMTKDLALIIHGSKLSRDHYLNTEEFIDAVADELKARLLKAKA.

NADP(+) is bound by residues 77-79 (TIT) and Arg-84. Thr-79 is a binding site for substrate. Substrate contacts are provided by residues 96–102 (SPNGTIR), Arg-111, and Arg-134. A Mn(2+)-binding site is contributed by Asp-254. Lys-262 provides a ligand contact to NADP(+). Asp-277 is a binding site for Mn(2+). Residues 312–317 (GTVTRH) and Asn-330 each bind NADP(+).

This sequence belongs to the isocitrate and isopropylmalate dehydrogenases family. In terms of assembly, heterodimer. Mg(2+) is required as a cofactor. The cofactor is Mn(2+).

It localises to the cytoplasm. The catalysed reaction is D-threo-isocitrate + NADP(+) = 2-oxoglutarate + CO2 + NADPH. Its function is as follows. May supply 2-oxoglutarate for amino acid biosynthesis and ammonia assimilation via the glutamine synthetase/glutamate synthase (GS/GOGAT) pathway. This chain is Isocitrate dehydrogenase [NADP], found in Nicotiana tabacum (Common tobacco).